Reading from the N-terminus, the 981-residue chain is MNEDKEQKINIHDILNTRPKLTKKTALDVFFEDLDDNVITPINEYVLDSGSSSSSSIYQALKCSNNNEFVAVLLQKFQNLHIHVLEQQRRLIESKSDLLPISLHDMKYVDELINLLIIHGIDANLSPTMKIPFDSKRINTFKKGQKSAEYETPRWHTINNDTLSQVITVFYNVLTSERSSDYLREIISKGSAYANILLGLIVLHLQLPNRYSSQMITNLEDTQETYTLFGVYTLLVETIQDEKVREPILSKLTTLTLRRPENGLISLIDFVLGVRDAEDIDIEKFNRIYQILMSKPKTMTNLQYLTELFKQIYDGLTFVNRPILVTCLNGLILKFYLRNKRIVNDFLFKKVRSIIFNSPLTDHTAKELNDVINVLISLSKNSSSDLLNDLVTSCPDEDGTTPGQFFLYVWIYALFLKKNQKLDPLEINKLSISDNKSTDSIHFPEQSSSKYYEVVLSLLKSLIVITENFQYLNVLSLNLLNFEHEKWKYLIDLDTQLPYISVKNTDMAELFFEKGSKNSQISEFLQDMDLSIELFMEFLVLLNDEEQSKTLFLDILKRWVHHTKKSEKRSSDNHSGMPSVTDNALILMDLKLLECMNNRFKTKIVNKPKDVLIVIDQLIDVVQEKDETIQEVEADSDDEVEEGEETEELDPNENSSYKIILQLLSTVLSESSSSILLQNSYILKSISRKLQSFNTNASEIDALLASIDNILINGHTTERNDNIEIEMDEERLDKAITSLHDPLVPIKSYGLTELRHLAEKKSPVISLEKVLQIHLDYLKNMDPFIYLNVIKGLTTLCELEPETILPLLAEFYANKKKKNRLDDVLKVGEVFINYIQRQNELFQGKLAYLIIDTCLSIVRPNDSKPLDNRWRMSSMSILGMCLQINARGVSDRIRDMLDCVFGILQLEQPQNHLKDKDDSFLMRRSAVHLIHDLLYSTGFDLLPFEYNYDKLKTLLSYVRDQDEDYMVCEQIDKLLTVLDSL.

HEAT repeat units follow at residues S64–I101, D161–G199, Y226–E261, K366–G403, K609–T646, S655–S692, I765–L799, E800–Q836, and E945–S980. A compositionally biased stretch (acidic residues) spans Q630–P651. The interval Q630–N652 is disordered.

This sequence belongs to the Tango6 family. Interacts with RNA polymerase II subunits RPB2 and RPB3. Interacts with the R2TP complex. Interacts with the nuclear pore complex subunits NUP100 and NUP116.

Its subcellular location is the cytoplasm. Required for the cytoplasmic assembly and the nuclear import of RNA polymerase II. May facilitate the starting interaction between RNA polymerase II subunits RPB2 and RPB3 and the subsequent interaction of the resulting complex with subunit RPB1. May also participate in the transport of RNA polymerase II through the nuclear pore complex. The polypeptide is RNA polymerase II assembly factor RTP1 (Saccharomyces cerevisiae (strain ATCC 204508 / S288c) (Baker's yeast)).